Consider the following 264-residue polypeptide: Thymidylate synthase (264 aa).

DUMP is bound at residue arginine 21. Residue histidine 51 participates in (6R)-5,10-methylene-5,6,7,8-tetrahydrofolate binding. 126-127 (RR) lines the dUMP pocket. Cysteine 146 functions as the Nucleophile in the catalytic mechanism. Residues 166–169 (RSCD), asparagine 177, and 207–209 (HLY) contribute to the dUMP site. Aspartate 169 is a (6R)-5,10-methylene-5,6,7,8-tetrahydrofolate binding site. Alanine 263 provides a ligand contact to (6R)-5,10-methylene-5,6,7,8-tetrahydrofolate.

This sequence belongs to the thymidylate synthase family. Bacterial-type ThyA subfamily. As to quaternary structure, homodimer.

It is found in the cytoplasm. It catalyses the reaction dUMP + (6R)-5,10-methylene-5,6,7,8-tetrahydrofolate = 7,8-dihydrofolate + dTMP. It participates in pyrimidine metabolism; dTTP biosynthesis. In terms of biological role, catalyzes the reductive methylation of 2'-deoxyuridine-5'-monophosphate (dUMP) to 2'-deoxythymidine-5'-monophosphate (dTMP) while utilizing 5,10-methylenetetrahydrofolate (mTHF) as the methyl donor and reductant in the reaction, yielding dihydrofolate (DHF) as a by-product. This enzymatic reaction provides an intracellular de novo source of dTMP, an essential precursor for DNA biosynthesis. The chain is Thymidylate synthase from Salmonella typhi.